Consider the following 446-residue polypeptide: Minor teichoic acid biosynthesis protein GgaA (446 aa).

The protein belongs to the glycosyltransferase 2 family.

Its pathway is cell wall biogenesis; poly(glucopyranosyl N-acetylgalactosamine 1-phosphate) teichoic acid biosynthesis. Involved in the biosynthesis of galactosamine-containing minor teichoic acid, a non-essential cell wall polymer in B.subtilis 168. The protein is Minor teichoic acid biosynthesis protein GgaA (ggaA) of Bacillus subtilis (strain 168).